A 724-amino-acid polypeptide reads, in one-letter code: Hyaluronan mediated motility receptor (724 aa).

Disordered stretches follow at residues 1-22 and 40-81; these read MSFPKAPLKRFNDPSGCAPSPG and KSQR…QKND. Phosphoserine is present on Ser20. Basic and acidic residues-rich tracts occupy residues 46-60 and 70-81; these read QQKESKQNLNVDKDT and KSSESKESQKND. N-linked (GlcNAc...) asparagine glycans are attached at residues Asn133, Asn477, Asn567, and Asn588. Positions 365-546 are required for interaction with FAM83D; it reads EEMVKEKNLF…ITDLQNQLKQ (182 aa). Hyaluronic acid-binding stretches follow at residues 635 to 645 and 657 to 666; these read KQKIKHVVKLK and KLRCQLAKKK. The residue at position 703 (Thr703) is a Phosphothreonine.

Interacts with ANKRD26. Interacts with DYNLL1. Interacts with FAM83D/CHICA. Expressed in testis. Expressed in the breast.

It localises to the cell surface. Its subcellular location is the cytoplasm. The protein resides in the cytoskeleton. The protein localises to the spindle. Receptor for hyaluronic acid (HA). Involved in cell motility. When hyaluronan binds to HMMR, the phosphorylation of a number of proteins, including PTK2/FAK1 occurs. May also be involved in cellular transformation and metastasis formation, and in regulating extracellular-regulated kinase (ERK) activity. May act as a regulator of adipogenisis. The protein is Hyaluronan mediated motility receptor (HMMR) of Homo sapiens (Human).